The following is a 20-amino-acid chain: VDDTTPLSEETMMRIGGYMV.

As to quaternary structure, disulfide-linked heterodimer of A and B chains.

Functionally, gal / GalNAc-specific lectin. Agglutinates both native and trypsin-treated rabbit erythrocytes but not human erythrocytes irrespective of blood group type. The sequence is that of N-acetyl-D-galactosamine-binding lectin subunit B from Iris hollandica (Dutch iris).